We begin with the raw amino-acid sequence, 287 residues long: Telomere repeat-binding factor 5 (287 aa).

The 62-residue stretch at 1-62 folds into the HTH myb-type domain; that stretch reads MGNQKLKWTA…WRNLSVPPGT (62 aa). Residues 28–58 constitute a DNA-binding region (H-T-H motif); the sequence is WKNILRDPEFADQLIHRSNIDLKDKWRNLSV. The interval 58–107 is disordered; it reads VPPGTQSLTNKARPAKVKEEGDTPAADANDAVTIPRPIPTIPPPPGRRTL. Pro residues predominate over residues 93–103; the sequence is RPIPTIPPPPG. Residues 119–193 form the H15 domain; that stretch reads NAPRYDGVIF…SIQNFYKIPD (75 aa). Residues 233–259 are a coiled coil; that stretch reads AACKVVEAENKIDVAKLAAEEFEKMTK.

Belongs to the histone H1/H5 family. SMH subfamily.

The protein localises to the nucleus. The protein resides in the chromosome. Its function is as follows. Binds preferentially double-stranded telomeric repeats. The chain is Telomere repeat-binding factor 5 from Arabidopsis thaliana (Mouse-ear cress).